The following is a 960-amino-acid chain: Chromo domain-containing protein 1 (960 aa).

The Chromo domain maps to 22–74 (YEVEDILADRVNKNGINEYYIKWAGYDWYDNTWEPEQNLFGAEKVLKKWKKRK).

As to quaternary structure, ago1, chp1 and tas3 interact to form the core of the RNA-induced transcriptional silencing (RITS) complex. The RITS complex interacts with the RDRC complex via interaction between ago1 and hrr1. Clr4 has a role in mediating this interaction. Interacts with dri1.

Its subcellular location is the nucleus. It localises to the cytoplasm. The protein localises to the cytoskeleton. It is found in the microtubule organizing center. The protein resides in the spindle pole body. Functionally, component of the kinetochore which plays a role in stabilizing microtubules and so allowing accurate chromosome segregation. Has a role in the RNA interference (RNAi) pathway which is important for heterochromatin formation and accurate chromosome segregation. A member of the RNA-induced transcriptional silencing (RITS) complex which is involved in the biosynthesis of dsRNA from primer siRNAs provided by the RNA-directed RNA polymerase (RDRC) complex. The protein is Chromo domain-containing protein 1 of Schizosaccharomyces pombe (strain 972 / ATCC 24843) (Fission yeast).